A 491-amino-acid chain; its full sequence is MLIFEKSRKNRRTLAHAIADKMDANDIPANLLRHDAPRLPELSELEVVRHFTRLSTQNFSIDTHFYPLGSCTMKYNPRAANRLASLPGYLKRHPLSPAPQSQAFLQCLYELQTMLTEITGMEKISLTSMAGAQGEFAGVAMIKAYHESRGDYDRTEMIVPDAAHGTNPASAAMCGFTVKEISTTKDGDIDLEKLRQMAGAKTAGIMLTNPSTLGVFERQISEVAKIIHNAGGLLYYDGANLNAILGKYRPGDMGFDVMHLNLHKTFATPHGGGGPGAGPVAAGPRLSKFLPVPMVGKNKEGYDWLTEKECPKSIGRLSAFMGNSGVLLRAYIYLRLLGKEGLSRVAEFSTLNANYLMKRLEQLGFTLAFPNRRASHEFIITLKPLTRAYGVTALDIAKRLLDYGFHAPTIYFPLLVPECLLIEPTETESKQTLDHFIEAMEKILTEIKTTPDLLRNAPHQQLINRLDEVKAARELDLRWYPIAKETEIFIQ.

N6-(pyridoxal phosphate)lysine is present on Lys264.

It belongs to the GcvP family. C-terminal subunit subfamily. In terms of assembly, the glycine cleavage system is composed of four proteins: P, T, L and H. In this organism, the P 'protein' is a heterodimer of two subunits. The cofactor is pyridoxal 5'-phosphate.

It catalyses the reaction N(6)-[(R)-lipoyl]-L-lysyl-[glycine-cleavage complex H protein] + glycine + H(+) = N(6)-[(R)-S(8)-aminomethyldihydrolipoyl]-L-lysyl-[glycine-cleavage complex H protein] + CO2. The glycine cleavage system catalyzes the degradation of glycine. The P protein binds the alpha-amino group of glycine through its pyridoxal phosphate cofactor; CO(2) is released and the remaining methylamine moiety is then transferred to the lipoamide cofactor of the H protein. This Coxiella burnetii (strain Dugway 5J108-111) protein is Probable glycine dehydrogenase (decarboxylating) subunit 2.